A 793-amino-acid chain; its full sequence is Vacuolar transporter chaperone complex subunit 4 (793 aa).

Topologically, residues 1–684 (MPFSKAWRSA…MVKWAEQATR (684 aa)) are cytoplasmic. ATP-binding residues include Lys215, Arg286, Arg288, Lys312, Lys325, and Arg391. Glu441 is a binding site for Mn(2+). The active site involves Lys473. Residues 575–595 (SVAPTMSPTDRPPSDEKKLTE) form a disordered region. A compositionally biased stretch (basic and acidic residues) spans 586 to 595 (PPSDEKKLTE). A helical membrane pass occupies residues 685-705 (VGVVGLAVIRFGNSMSLPNDM). Topologically, residues 706 to 717 (VAVHSFWRANFH) are vacuolar. Residues 718-738 (IVLGSLMVVVAECVLVYAYVT) form a helical membrane-spanning segment. Residues 739–760 (FKSRSRRVYARRKIRYDDRRGP) lie on the Cytoplasmic side of the membrane. Residues 761-781 (VALTFVILAVILITVMMHVMV) form a helical membrane-spanning segment. At 782-793 (RYGPMLTGSDTF) the chain is on the vacuolar side.

It belongs to the VTC4 family. In terms of assembly, the VTC core complex is an integral membrane heterooligomer composed of at least the catalytic subunit vtc4 and the accessory subunits vtc1 and vtc2. vtc1 is a small membrane protein without hydrophilic domain. Vtc2 and vtc4 are related and have 2 hydrophilic domains that face the cytosol, an N-terminal SPX domain and the central core domain. The central core in vtc4 is the catalytic domain. It depends on Mn(2+) as a cofactor.

It localises to the acidocalcisome membrane. The enzyme catalyses [phosphate](n) + ATP = [phosphate](n+1) + ADP. Its activity is regulated as follows. Activity of the enzyme is Mn(2+)-dependent and enhanced in the presence of pyrophosphate (PPi). In terms of biological role, component of a polyphosphate synthase complex that utilizes ATP to synthesize and translocate polyphosphate to acidocalcisomes in epimastigotes, insect-stages of Trypanosoma brucei. Catalytic subunit of the vacuolar transporter chaperone (VTC) complex. The VTC complex acts as a vacuolar polyphosphate polymerase that catalyzes the synthesis of inorganic polyphosphate (polyP) via transfer of phosphate from ATP to a growing polyP chain, releasing ADP. VTC exposes its catalytic domain vtc4 to the cytosol, where the growing polyP chain winds through a tunnel-shaped pocket, integrating cytoplasmic polymer synthesis with polyP membrane translocation. The VTC complex carries 9 vacuolar transmembrane domains, which are likely to constitute the translocation channel into the organelle lumen. PolyP synthesis is tightly coupled to its transport into the vacuole lumen, in order to avoid otherwise toxic intermediates in the cytosol, and it depends on the proton gradient across the membrane, formed by V-ATPase. The VTC complex also plays a role in vacuolar membrane fusion. Essential for infection and parasite survival in the mammalian host. In Trypanosoma brucei brucei (strain 927/4 GUTat10.1), this protein is Vacuolar transporter chaperone complex subunit 4 (vtc4).